A 372-amino-acid polypeptide reads, in one-letter code: sn-glycerol-3-phosphate import ATP-binding protein UgpC (372 aa).

The ABC transporter domain occupies 2–233 (LDIQQLVKTY…PASTFVASFI (232 aa)). Position 35–42 (35–42 (GPSGCGKS)) interacts with ATP.

This sequence belongs to the ABC transporter superfamily. sn-glycerol-3-phosphate importer (TC 3.A.1.1.3) family. The complex is composed of two ATP-binding proteins (UgpC), two transmembrane proteins (UgpA and UgpE) and a solute-binding protein (UgpB).

It is found in the cell inner membrane. It carries out the reaction sn-glycerol 3-phosphate(out) + ATP + H2O = sn-glycerol 3-phosphate(in) + ADP + phosphate + H(+). In terms of biological role, part of the ABC transporter complex UgpBAEC involved in sn-glycerol-3-phosphate (G3P) import. Responsible for energy coupling to the transport system. This is sn-glycerol-3-phosphate import ATP-binding protein UgpC from Vibrio vulnificus (strain CMCP6).